The sequence spans 505 residues: 2,3-bisphosphoglycerate-independent phosphoglycerate mutase (505 aa).

2 residues coordinate Mn(2+): Asp12 and Ser62. Residue Ser62 is the Phosphoserine intermediate of the active site. Substrate contacts are provided by residues His123, 153–154, Arg185, Arg191, 257–260, and Lys330; these read RD and RPDR. Asp397, His401, Asp438, His439, and His456 together coordinate Mn(2+).

This sequence belongs to the BPG-independent phosphoglycerate mutase family. As to quaternary structure, monomer. The cofactor is Mn(2+).

It carries out the reaction (2R)-2-phosphoglycerate = (2R)-3-phosphoglycerate. It participates in carbohydrate degradation; glycolysis; pyruvate from D-glyceraldehyde 3-phosphate: step 3/5. In terms of biological role, catalyzes the interconversion of 2-phosphoglycerate and 3-phosphoglycerate. The protein is 2,3-bisphosphoglycerate-independent phosphoglycerate mutase of Staphylococcus saprophyticus subsp. saprophyticus (strain ATCC 15305 / DSM 20229 / NCIMB 8711 / NCTC 7292 / S-41).